The chain runs to 424 residues: NADH-quinone oxidoreductase subunit H (424 aa).

The next 9 membrane-spanning stretches (helical) occupy residues 11–31 (LVVAKAIAIFVFLMLTVLVAI), 79–99 (FVYFVAPIISVIPAFTAFAFI), 119–139 (LPVAVLFILGLSAIGVYGIVL), 160–180 (VISYEVAMGLSFAAVFLYAGS), 193–213 (VWYIFLLLPSFVIYLISMVGE), 255–275 (VSALAATLFLGGWHAPWPLNL), 283–303 (WWPVLWFTAKVWGFLFMYFWL), 317–337 (ALGWKLLIPVSLVWVLIAAVI), and 347–367 (YWTPALVVSSIVVAAILVMSL). Residues 376-424 (AVTKARRRGKQPAAGPDEQGALEPLFPTPPLPMKPLAQPVGASKENARG) form a disordered region.

This sequence belongs to the complex I subunit 1 family. In terms of assembly, NDH-1 is composed of 14 different subunits. Subunits NuoA, H, J, K, L, M, N constitute the membrane sector of the complex.

The protein localises to the cell membrane. The enzyme catalyses a quinone + NADH + 5 H(+)(in) = a quinol + NAD(+) + 4 H(+)(out). NDH-1 shuttles electrons from NADH, via FMN and iron-sulfur (Fe-S) centers, to quinones in the respiratory chain. The immediate electron acceptor for the enzyme in this species is believed to be menaquinone. Couples the redox reaction to proton translocation (for every two electrons transferred, four hydrogen ions are translocated across the cytoplasmic membrane), and thus conserves the redox energy in a proton gradient. This subunit may bind ubiquinone. The protein is NADH-quinone oxidoreductase subunit H of Mycobacterium ulcerans (strain Agy99).